Consider the following 67-residue polypeptide: Protein AaeX (67 aa).

A run of 2 helical transmembrane segments spans residues 3–23 (LFPV…ELIL) and 43–63 (FVWH…YLIS).

Belongs to the AaeX family.

It localises to the cell membrane. This chain is Protein AaeX, found in Enterobacter sp. (strain 638).